Here is a 350-residue protein sequence, read N- to C-terminus: Glyceraldehyde-3-phosphate dehydrogenase (350 aa).

Residues 13–14 (TI) and glycine 118 each bind NAD(+). 147–149 (SCN) provides a ligand contact to D-glyceraldehyde 3-phosphate. Catalysis depends on cysteine 148, which acts as the Nucleophile. An NAD(+)-binding site is contributed by arginine 176. 202 to 203 (HG) contributes to the D-glyceraldehyde 3-phosphate binding site. Glutamine 309 is a binding site for NAD(+). A disordered region spans residues 327-350 (LEEDPEASMDATDSALGVLNSPPL).

The protein belongs to the glyceraldehyde-3-phosphate dehydrogenase family. Homotetramer.

The protein localises to the cytoplasm. The enzyme catalyses D-glyceraldehyde 3-phosphate + phosphate + NADP(+) = (2R)-3-phospho-glyceroyl phosphate + NADPH + H(+). It carries out the reaction D-glyceraldehyde 3-phosphate + phosphate + NAD(+) = (2R)-3-phospho-glyceroyl phosphate + NADH + H(+). Its pathway is carbohydrate degradation; glycolysis; pyruvate from D-glyceraldehyde 3-phosphate: step 1/5. The chain is Glyceraldehyde-3-phosphate dehydrogenase from Methanopyrus kandleri (strain AV19 / DSM 6324 / JCM 9639 / NBRC 100938).